The sequence spans 225 residues: NAD(P)H-quinone oxidoreductase subunit K, chloroplastic (225 aa).

The [4Fe-4S] cluster site is built by Cys43, Cys44, Cys108, and Cys139.

The protein belongs to the complex I 20 kDa subunit family. In terms of assembly, NDH is composed of at least 16 different subunits, 5 of which are encoded in the nucleus. The cofactor is [4Fe-4S] cluster.

The protein resides in the plastid. The protein localises to the chloroplast thylakoid membrane. The catalysed reaction is a plastoquinone + NADH + (n+1) H(+)(in) = a plastoquinol + NAD(+) + n H(+)(out). It catalyses the reaction a plastoquinone + NADPH + (n+1) H(+)(in) = a plastoquinol + NADP(+) + n H(+)(out). In terms of biological role, NDH shuttles electrons from NAD(P)H:plastoquinone, via FMN and iron-sulfur (Fe-S) centers, to quinones in the photosynthetic chain and possibly in a chloroplast respiratory chain. The immediate electron acceptor for the enzyme in this species is believed to be plastoquinone. Couples the redox reaction to proton translocation, and thus conserves the redox energy in a proton gradient. In Oryza nivara (Indian wild rice), this protein is NAD(P)H-quinone oxidoreductase subunit K, chloroplastic.